Here is a 108-residue protein sequence, read N- to C-terminus: uncharacterized protein (108 aa).

The first 16 residues, 1–16, serve as a signal peptide directing secretion; sequence MKKLILIAIMASGLVA. A lipid anchor (N-palmitoyl cysteine) is attached at Cys-17. The S-diacylglycerol cysteine moiety is linked to residue Cys-17.

The protein resides in the cell membrane. This is an uncharacterized protein from Escherichia coli (strain K12).